Consider the following 624-residue polypeptide: Chaperone protein HtpG (624 aa).

Residues 1–336 form an a; substrate-binding region; it reads MKGQETRGFQ…SSDLPLNVSR (336 aa). The interval 337-552 is b; it reads EILQDSTVTR…ADEMSTQMAK (216 aa). The segment at 553–624 is c; the sequence is LFAAAGQKVP…IRRMNQLLVS (72 aa).

This sequence belongs to the heat shock protein 90 family. As to quaternary structure, homodimer.

Its subcellular location is the cytoplasm. Its function is as follows. Molecular chaperone. Has ATPase activity. In Shigella flexneri, this protein is Chaperone protein HtpG.